Consider the following 277-residue polypeptide: Odontogenic ameloblast-associated protein (277 aa).

An N-terminal signal peptide occupies residues 1–15 (MRTLILLGILGATMS). The disordered stretch occupies residues 103 to 124 (TQAGQLDPSQPQTPQQTQRGPK). Threonine 115 is a glycosylation site (O-linked (GalNAc...) threonine). Residues 127 to 129 (MPS) are interaction with ARHGEF5. O-linked (GalNAc...) threonine glycosylation is found at threonine 208, threonine 248, and threonine 271.

This sequence belongs to the ODAM family. Interacts (via C-terminus) with ARHGEF5. Post-translationally, O-glycosylated.

It is found in the secreted. The protein resides in the cytoplasm. It localises to the nucleus. Functionally, tooth-associated epithelia protein that probably plays a role in odontogenesis, the complex process that results in the initiation and generation of the tooth. May be incorporated in the enamel matrix at the end of mineralization process. Involved in the induction of RHOA activity via interaction with ARHGEF and expression of downstream factors such as ROCK. Plays a role in attachment of the junctional epithelium to the tooth surface. This chain is Odontogenic ameloblast-associated protein (ODAM), found in Bos taurus (Bovine).